Reading from the N-terminus, the 539-residue chain is MDPGTLLDKLESGDQELVQKALAEYNQENSQCFFFNAEQREERKKLGELVIKFLNRDLQPSCQMACLETIRILSRDKHALSPFTGRSAIQTLAQYAGLDYSEEMEMPSIPDGESAVEALKGLCNIIYNSVEAQEVAKELRLVCGLARRLKLYNETRSSHESKFFDLRLLFLLTALSVDMRKQLAQELRGVSLLTDALESTLALKWSDIYEVVTDRLAPPLGKEETERVMEILKTLFNITFDISRREVDEEDAALYRHLAAILRHCLLRQCDGEDRTEEFHGHTVNLLVNLPLMCLDVLLTPKVEQGSVEYMGMNMDTVEVLIQFLDRRLDRGHKLRETLTPVLNLLTESSRVHRETRKFLRAKVLPPLRDVKNRPEVGNTLRNKLVRLMTHVDTDVKHCAAEFLFVLCKENVSRFVKYTGYGNAAGLLAARGLLAGGRGEGRYSEDEDTDTEEYREAKPNINPVTGRVEEKQPNPMDGMTEEQKEYEAMKLVNMFDKLSREQIIQPMGVTSDGRLEPLDEAAQKMLQRQESSDLESDSD.

The protein belongs to the synembryn family.

The protein resides in the cytoplasm. The protein localises to the cell cortex. In terms of biological role, chaperone that specifically binds and folds nascent G alpha proteins prior to G protein heterotrimer formation, promoting their stability and activity: folds GNAI1, GNAO1, GNA13 and GNAQ. Does not fold G(s) G-alpha proteins GNAS nor GNAL. Also acts as a guanine nucleotide exchange factor (GEF) for G alpha proteins by stimulating exchange of bound GDP for free GTP. The polypeptide is Chaperone Ric-8A (ric8a) (Xenopus tropicalis (Western clawed frog)).